Here is a 326-residue protein sequence, read N- to C-terminus: Pyruvate dehydrogenase E1 component subunit beta (326 aa).

Glu60 lines the thiamine diphosphate pocket. 4 residues coordinate K(+): Ile113, Ala161, Ile162, and Asn166.

In terms of assembly, heterodimer of an alpha and a beta chain. The cofactor is thiamine diphosphate.

The protein resides in the plastid. Its subcellular location is the chloroplast. It catalyses the reaction N(6)-[(R)-lipoyl]-L-lysyl-[protein] + pyruvate + H(+) = N(6)-[(R)-S(8)-acetyldihydrolipoyl]-L-lysyl-[protein] + CO2. Functionally, the pyruvate dehydrogenase complex catalyzes the overall conversion of pyruvate to acetyl-CoA and CO(2). It contains multiple copies of three enzymatic components: pyruvate dehydrogenase (E1), dihydrolipoamide acetyltransferase (E2) and lipoamide dehydrogenase (E3). The polypeptide is Pyruvate dehydrogenase E1 component subunit beta (pdhB) (Chaetosphaeridium globosum (Charophycean green alga)).